The sequence spans 313 residues: Ribosomal protein L11 methyltransferase (313 aa).

Residues Thr-164, Gly-185, Asp-207, and Asn-249 each coordinate S-adenosyl-L-methionine.

The protein belongs to the methyltransferase superfamily. PrmA family.

It is found in the cytoplasm. The enzyme catalyses L-lysyl-[protein] + 3 S-adenosyl-L-methionine = N(6),N(6),N(6)-trimethyl-L-lysyl-[protein] + 3 S-adenosyl-L-homocysteine + 3 H(+). Its function is as follows. Methylates ribosomal protein L11. This is Ribosomal protein L11 methyltransferase from Clostridium perfringens (strain 13 / Type A).